The primary structure comprises 502 residues: Glycerol kinase (502 aa).

Thr-14 serves as a coordination point for ADP. ATP contacts are provided by Thr-14, Thr-15, and Ser-16. Residue Thr-14 participates in sn-glycerol 3-phosphate binding. ADP is bound at residue Arg-18. The sn-glycerol 3-phosphate site is built by Arg-84, Glu-85, Tyr-136, and Asp-246. 5 residues coordinate glycerol: Arg-84, Glu-85, Tyr-136, Asp-246, and Gln-247. ADP-binding residues include Thr-268 and Gly-311. Thr-268, Gly-311, Gln-315, and Gly-412 together coordinate ATP. ADP is bound by residues Gly-412 and Asn-416.

Belongs to the FGGY kinase family. Homotetramer and homodimer (in equilibrium). Heterodimer with EIIA-Glc. Binds 1 zinc ion per glycerol kinase EIIA-Glc dimer. The zinc ion is important for dimerization.

It carries out the reaction glycerol + ATP = sn-glycerol 3-phosphate + ADP + H(+). It participates in polyol metabolism; glycerol degradation via glycerol kinase pathway; sn-glycerol 3-phosphate from glycerol: step 1/1. Activity of this regulatory enzyme is affected by several metabolites. Allosterically and non-competitively inhibited by fructose 1,6-bisphosphate (FBP) and unphosphorylated phosphocarrier protein EIIA-Glc (III-Glc), an integral component of the bacterial phosphotransferase (PTS) system. Its function is as follows. Key enzyme in the regulation of glycerol uptake and metabolism. Catalyzes the phosphorylation of glycerol to yield sn-glycerol 3-phosphate. The protein is Glycerol kinase of Shigella boydii serotype 18 (strain CDC 3083-94 / BS512).